Here is a 653-residue protein sequence, read N- to C-terminus: MEQEREIVFSLSPEETSELKNGVNLISRSEKEKFVIYKDPTAENTVEEPATSHMYKACLNKCKHQGGTFIKDIEDGDNCILRCTKHGWKLDAKTMRYVNPPDSFSQQQLVPEYNEDGSLDIVELKPPQPWETDKRDPMPLEVGEVQITYFTHACIEIKLGDLIMFTDPWLIGPAFARGWWLMHEPPADWLDRLAKADLIYISHLHSDHLNYPTLELLSQRNPDIPIYVGDTSMPVFVRLEQSGVKLNNIHIKKFGKWIEINKDTRFMIMMDGVHPDMDTCALIDYKGHLILDTVDCTNPNGGRLPIGVDMMLSDFAGGASGFPMTFSGGKYTEEWKAEFVKRERRKLLYYKMQQVRDVAPTVYCPFAGYFVEAHPSDHYIRSTNTKNDPDALNALINKYSPNIKTWSPSPGAVLDLKKAIQGDRDFITDPPRGTQKFKDSWDFEKYVNAINKNIEEEIFSYPEWIQFYYKWTGFKNYNLVIRMVERDDDFCPVVGGYDFMVDFVGEEPTFPTERPAREHSYLEMENRIGVHRETVRQGLFWDDLYIGFNNRISREPDTFHYLFWNHMQILLPRTDPDWEGFLRDMKTEGAPQKAIWNPSQATPAVEAKDPSSDSKDSATKPGTHWNYERLLRPLGIVVALVGVGVAIWKSESK.

Residues 11-120 (LSPEETSELK…PEYNEDGSLD (110 aa)) form the Rieske domain. [2Fe-2S] cluster contacts are provided by Cys-62, His-64, Cys-83, and His-86. The disordered stretch occupies residues 596 to 622 (WNPSQATPAVEAKDPSSDSKDSATKPG). Over residues 606–618 (EAKDPSSDSKDSA) the composition is skewed to basic and acidic residues. A helical membrane pass occupies residues 630–647 (LLRPLGIVVALVGVGVAI).

Belongs to the CMP-Neu5Ac hydroxylase family. It depends on [2Fe-2S] cluster as a cofactor.

It is found in the membrane. It catalyses the reaction CMP-N-acetyl-beta-neuraminate + 2 Fe(II)-[cytochrome b5] + O2 + 2 H(+) = CMP-N-glycoloyl-beta-neuraminate + 2 Fe(III)-[cytochrome b5] + H2O. It participates in amino-sugar metabolism; N-acetylneuraminate metabolism. Sialic acids are components of carbohydrate chains of glycoconjugates and are involved in cell-cell recognition and cell-pathogen interactions. Catalyzes the conversion of CMP-N-acetylneuraminic acid (CMP-Neu5Ac) into its hydroxylated derivative CMP-N-glycolylneuraminic acid (CMP-Neu5Gc), a sialic acid abundantly expressed at the surface of many cells. This chain is Cytidine monophosphate-N-acetylneuraminic acid hydroxylase (cnh), found in Asterias rubens (Common European starfish).